We begin with the raw amino-acid sequence, 256 residues long: UPF0259 membrane protein plu2479 (256 aa).

A run of 5 helical transmembrane segments spans residues 23 to 43, 89 to 109, 132 to 152, 192 to 212, and 221 to 241; these read TLTL…LFIP, IFSS…LVAA, LFLL…LMLV, LLVP…FIID, and MAGI…LIYL.

Belongs to the UPF0259 family.

It is found in the cell inner membrane. The protein is UPF0259 membrane protein plu2479 of Photorhabdus laumondii subsp. laumondii (strain DSM 15139 / CIP 105565 / TT01) (Photorhabdus luminescens subsp. laumondii).